The following is a 222-amino-acid chain: Ribonuclease 3 (222 aa).

The 123-residue stretch at 5–127 (PIKLEKKLKL…LIGAIYLDKG (123 aa)) folds into the RNase III domain. A Mg(2+)-binding site is contributed by Glu-41. Residue Asp-45 is part of the active site. The Mg(2+) site is built by Asp-113 and Glu-116. Glu-116 is a catalytic residue. The region spanning 152-221 (DAKTKLQEYS…ASLCLQDIFK (70 aa)) is the DRBM domain.

This sequence belongs to the ribonuclease III family. As to quaternary structure, homodimer. Mg(2+) is required as a cofactor.

The protein resides in the cytoplasm. It carries out the reaction Endonucleolytic cleavage to 5'-phosphomonoester.. In terms of biological role, digests double-stranded RNA. Involved in the processing of primary rRNA transcript to yield the immediate precursors to the large and small rRNAs (23S and 16S). Processes some mRNAs, and tRNAs when they are encoded in the rRNA operon. Processes pre-crRNA and tracrRNA of type II CRISPR loci if present in the organism. In Pelagibacter ubique (strain HTCC1062), this protein is Ribonuclease 3.